Reading from the N-terminus, the 340-residue chain is Oxygen-dependent coproporphyrinogen-III oxidase (340 aa).

The segment covering Met1 to Ser14 has biased composition (polar residues). Positions Met1–Gln22 are disordered. Ser109 serves as a coordination point for substrate. Positions 113 and 123 each coordinate a divalent metal cation. His123 acts as the Proton donor in catalysis. Residue Asn125–Arg127 participates in substrate binding. Residues His157 and His187 each contribute to the a divalent metal cation site. The important for dimerization stretch occupies residues Tyr278–Gln313. Asn296–Arg298 is a binding site for substrate.

This sequence belongs to the aerobic coproporphyrinogen-III oxidase family. Homodimer. It depends on a divalent metal cation as a cofactor.

The protein resides in the cytoplasm. It carries out the reaction coproporphyrinogen III + O2 + 2 H(+) = protoporphyrinogen IX + 2 CO2 + 2 H2O. It participates in porphyrin-containing compound metabolism; protoporphyrin-IX biosynthesis; protoporphyrinogen-IX from coproporphyrinogen-III (O2 route): step 1/1. Its function is as follows. Involved in the heme and chlorophyll biosynthesis. Catalyzes the aerobic oxidative decarboxylation of propionate groups of rings A and B of coproporphyrinogen-III to yield the vinyl groups in protoporphyrinogen-IX. This chain is Oxygen-dependent coproporphyrinogen-III oxidase, found in Synechocystis sp. (strain ATCC 27184 / PCC 6803 / Kazusa).